A 231-amino-acid chain; its full sequence is Homeobox protein EMX1 (231 aa).

Residues Pro-133–Lys-192 constitute a DNA-binding region (homeobox). Residues Leu-193–Ala-231 form a disordered region. The span at Lys-203–Arg-212 shows a compositional bias: basic residues.

The protein belongs to the EMX homeobox family.

It localises to the nucleus. Its function is as follows. May function in combinations with OTX1/2 to specify cell fates in the developing central nervous system. The protein is Homeobox protein EMX1 (emx1) of Danio rerio (Zebrafish).